Reading from the N-terminus, the 156-residue chain is SsrA-binding protein (156 aa).

The protein belongs to the SmpB family.

The protein localises to the cytoplasm. Functionally, required for rescue of stalled ribosomes mediated by trans-translation. Binds to transfer-messenger RNA (tmRNA), required for stable association of tmRNA with ribosomes. tmRNA and SmpB together mimic tRNA shape, replacing the anticodon stem-loop with SmpB. tmRNA is encoded by the ssrA gene; the 2 termini fold to resemble tRNA(Ala) and it encodes a 'tag peptide', a short internal open reading frame. During trans-translation Ala-aminoacylated tmRNA acts like a tRNA, entering the A-site of stalled ribosomes, displacing the stalled mRNA. The ribosome then switches to translate the ORF on the tmRNA; the nascent peptide is terminated with the 'tag peptide' encoded by the tmRNA and targeted for degradation. The ribosome is freed to recommence translation, which seems to be the essential function of trans-translation. This is SsrA-binding protein from Renibacterium salmoninarum (strain ATCC 33209 / DSM 20767 / JCM 11484 / NBRC 15589 / NCIMB 2235).